Consider the following 305-residue polypeptide: Large ribosomal subunit protein uL10 (305 aa).

Belongs to the universal ribosomal protein uL10 family. As to quaternary structure, P0 forms a pentameric complex by interaction with dimers of P1 and P2. In terms of processing, phosphorylated.

Functionally, ribosomal protein P0 is the functional equivalent of E.coli protein L10. The sequence is that of Large ribosomal subunit protein uL10 (rplp0) from Dictyostelium discoideum (Social amoeba).